We begin with the raw amino-acid sequence, 418 residues long: 4-hydroxy-3-methylbut-2-en-1-yl diphosphate synthase (flavodoxin) (418 aa).

Residues Cys-305, Cys-308, Cys-351, and Glu-358 each contribute to the [4Fe-4S] cluster site.

It belongs to the IspG family. The cofactor is [4Fe-4S] cluster.

The catalysed reaction is (2E)-4-hydroxy-3-methylbut-2-enyl diphosphate + oxidized [flavodoxin] + H2O + 2 H(+) = 2-C-methyl-D-erythritol 2,4-cyclic diphosphate + reduced [flavodoxin]. It participates in isoprenoid biosynthesis; isopentenyl diphosphate biosynthesis via DXP pathway; isopentenyl diphosphate from 1-deoxy-D-xylulose 5-phosphate: step 5/6. Functionally, converts 2C-methyl-D-erythritol 2,4-cyclodiphosphate (ME-2,4cPP) into 1-hydroxy-2-methyl-2-(E)-butenyl 4-diphosphate. This chain is 4-hydroxy-3-methylbut-2-en-1-yl diphosphate synthase (flavodoxin), found in Bartonella bacilliformis (strain ATCC 35685 / KC583 / Herrer 020/F12,63).